A 308-amino-acid polypeptide reads, in one-letter code: Ribonuclease Z (308 aa).

Zn(2+) contacts are provided by His60, His62, Asp64, His65, His140, Asp209, and His269. The active-site Proton acceptor is the Asp64.

The protein belongs to the RNase Z family. As to quaternary structure, homodimer. It depends on Zn(2+) as a cofactor.

The catalysed reaction is Endonucleolytic cleavage of RNA, removing extra 3' nucleotides from tRNA precursor, generating 3' termini of tRNAs. A 3'-hydroxy group is left at the tRNA terminus and a 5'-phosphoryl group is left at the trailer molecule.. Its function is as follows. Zinc phosphodiesterase, which displays some tRNA 3'-processing endonuclease activity. Probably involved in tRNA maturation, by removing a 3'-trailer from precursor tRNA. In Methanococcus maripaludis (strain C6 / ATCC BAA-1332), this protein is Ribonuclease Z.